A 310-amino-acid chain; its full sequence is Ribosomal RNA small subunit methyltransferase H (310 aa).

S-adenosyl-L-methionine is bound by residues 33-35 (GGH), Asp52, Phe79, Asp98, and Gln105.

Belongs to the methyltransferase superfamily. RsmH family.

Its subcellular location is the cytoplasm. It catalyses the reaction cytidine(1402) in 16S rRNA + S-adenosyl-L-methionine = N(4)-methylcytidine(1402) in 16S rRNA + S-adenosyl-L-homocysteine + H(+). In terms of biological role, specifically methylates the N4 position of cytidine in position 1402 (C1402) of 16S rRNA. This chain is Ribosomal RNA small subunit methyltransferase H, found in Campylobacter jejuni (strain RM1221).